We begin with the raw amino-acid sequence, 161 residues long: Large ribosomal subunit protein eL21 (161 aa).

The protein belongs to the eukaryotic ribosomal protein eL21 family.

The sequence is that of Large ribosomal subunit protein eL21 (rpl-21) from Caenorhabditis elegans.